The chain runs to 139 residues: Transcription antitermination protein NusB (139 aa).

The protein belongs to the NusB family.

Its function is as follows. Involved in transcription antitermination. Required for transcription of ribosomal RNA (rRNA) genes. Binds specifically to the boxA antiterminator sequence of the ribosomal RNA (rrn) operons. This Idiomarina loihiensis (strain ATCC BAA-735 / DSM 15497 / L2-TR) protein is Transcription antitermination protein NusB.